The primary structure comprises 1055 residues: DIS3-like exonuclease 2 (1055 aa).

2 disordered regions span residues 1-109 (MKSA…SSPE) and 229-249 (SAAKPEGTNSPPEKDDKKARQ). Residues 17-32 (HKKKRNRPQKQNRRSK) are compositionally biased toward basic residues. The segment covering 39–59 (EDAHVEESLDGRDSSRSKAKD) has biased composition (basic and acidic residues). The span at 97–108 (PRRSASPLLSSP) shows a compositional bias: low complexity. Residues Asp488 and Asp497 each contribute to the Mg(2+) site.

It belongs to the RNR ribonuclease family. DIS3L2 subfamily. Requires Mg(2+) as cofactor. Mn(2+) is required as a cofactor. As to expression, widely expressed.

The protein resides in the cytoplasm. It is found in the P-body. Its function is as follows. 3'-5'-exoribonuclease that specifically recognizes RNAs polyuridylated at their 3' end and mediates their degradation. Component of an exosome-independent RNA degradation pathway that mediates degradation of cytoplasmic mRNAs that have been deadenylated and subsequently uridylated at their 3'. This Arabidopsis thaliana (Mouse-ear cress) protein is DIS3-like exonuclease 2 (SOV).